The following is a 680-amino-acid chain: DNA-directed RNA polymerase subunit beta' (680 aa).

Residues cysteine 69, cysteine 71, cysteine 87, and cysteine 90 each contribute to the Zn(2+) site. Mg(2+)-binding residues include aspartate 489, aspartate 491, and aspartate 493.

The protein belongs to the RNA polymerase beta' chain family. RpoC1 subfamily. In plastids the minimal PEP RNA polymerase catalytic core is composed of four subunits: alpha, beta, beta', and beta''. When a (nuclear-encoded) sigma factor is associated with the core the holoenzyme is formed, which can initiate transcription. The cofactor is Mg(2+). Zn(2+) serves as cofactor.

The protein resides in the plastid. It localises to the chloroplast. It catalyses the reaction RNA(n) + a ribonucleoside 5'-triphosphate = RNA(n+1) + diphosphate. In terms of biological role, DNA-dependent RNA polymerase catalyzes the transcription of DNA into RNA using the four ribonucleoside triphosphates as substrates. This Arabis hirsuta (Hairy rock-cress) protein is DNA-directed RNA polymerase subunit beta'.